Reading from the N-terminus, the 445-residue chain is Phosphoglucosamine mutase (445 aa).

The active-site Phosphoserine intermediate is serine 102. Mg(2+)-binding residues include serine 102, aspartate 241, aspartate 243, and aspartate 245. Serine 102 bears the Phosphoserine mark.

This sequence belongs to the phosphohexose mutase family. It depends on Mg(2+) as a cofactor. Activated by phosphorylation.

The catalysed reaction is alpha-D-glucosamine 1-phosphate = D-glucosamine 6-phosphate. In terms of biological role, catalyzes the conversion of glucosamine-6-phosphate to glucosamine-1-phosphate. The protein is Phosphoglucosamine mutase of Salmonella dublin (strain CT_02021853).